The chain runs to 210 residues: Cytochrome c oxidase subunit 2 (210 aa).

The Mitochondrial intermembrane portion of the chain corresponds to 1–15; that stretch reads MSFILTFWMIFLMDS. A helical membrane pass occupies residues 16–36; it reads IIVLISFSIFLSVWICALIIA. At 37 to 63 the chain is on the mitochondrial matrix side; it reads TVLTVTKINNIYCTWDFISSKFIDTYW. The chain crosses the membrane as a helical span at residues 64–84; the sequence is FVLGMMFILCLLLRLCLLLYF. Residues 85–210 lie on the Mitochondrial intermembrane side of the membrane; it reads SCINFVSFDL…GFMPIVINFI (126 aa). The Cu cation site is built by His-157, Cys-192, Glu-194, Cys-196, His-200, and Met-203. Glu-194 is a Mg(2+) binding site.

This sequence belongs to the cytochrome c oxidase subunit 2 family. In terms of assembly, component of the cytochrome c oxidase (complex IV, CIV), a multisubunit enzyme composed of a catalytic core of 3 subunits and several supernumerary subunits. The complex exists as a monomer or a dimer and forms supercomplexes (SCs) in the inner mitochondrial membrane with ubiquinol-cytochrome c oxidoreductase (cytochrome b-c1 complex, complex III, CIII). It depends on Cu cation as a cofactor.

The protein localises to the mitochondrion inner membrane. It carries out the reaction 4 Fe(II)-[cytochrome c] + O2 + 8 H(+)(in) = 4 Fe(III)-[cytochrome c] + 2 H2O + 4 H(+)(out). In terms of biological role, component of the cytochrome c oxidase, the last enzyme in the mitochondrial electron transport chain which drives oxidative phosphorylation. The respiratory chain contains 3 multisubunit complexes succinate dehydrogenase (complex II, CII), ubiquinol-cytochrome c oxidoreductase (cytochrome b-c1 complex, complex III, CIII) and cytochrome c oxidase (complex IV, CIV), that cooperate to transfer electrons derived from NADH and succinate to molecular oxygen, creating an electrochemical gradient over the inner membrane that drives transmembrane transport and the ATP synthase. Cytochrome c oxidase is the component of the respiratory chain that catalyzes the reduction of oxygen to water. Electrons originating from reduced cytochrome c in the intermembrane space (IMS) are transferred via the dinuclear copper A center (CU(A)) of subunit 2 and heme A of subunit 1 to the active site in subunit 1, a binuclear center (BNC) formed by heme A3 and copper B (CU(B)). The BNC reduces molecular oxygen to 2 water molecules using 4 electrons from cytochrome c in the IMS and 4 protons from the mitochondrial matrix. This chain is Cytochrome c oxidase subunit 2 (COXII), found in Trypanosoma brucei brucei.